The primary structure comprises 790 residues: LPS-assembly protein LptD (790 aa).

Residues 1–20 (MRMLRWLILSAFSVAGAVQA) form the signal peptide.

The protein belongs to the LptD family. Component of the lipopolysaccharide transport and assembly complex. Interacts with LptE and LptA.

The protein resides in the cell outer membrane. Its function is as follows. Together with LptE, is involved in the assembly of lipopolysaccharide (LPS) at the surface of the outer membrane. In Bordetella parapertussis (strain 12822 / ATCC BAA-587 / NCTC 13253), this protein is LPS-assembly protein LptD.